The chain runs to 160 residues: Crossover junction endodeoxyribonuclease RuvC (160 aa).

Active-site residues include Asp-9, Glu-68, and Asp-141. 3 residues coordinate Mg(2+): Asp-9, Glu-68, and Asp-141.

Belongs to the RuvC family. As to quaternary structure, homodimer which binds Holliday junction (HJ) DNA. The HJ becomes 2-fold symmetrical on binding to RuvC with unstacked arms; it has a different conformation from HJ DNA in complex with RuvA. In the full resolvosome a probable DNA-RuvA(4)-RuvB(12)-RuvC(2) complex forms which resolves the HJ. It depends on Mg(2+) as a cofactor.

It is found in the cytoplasm. It carries out the reaction Endonucleolytic cleavage at a junction such as a reciprocal single-stranded crossover between two homologous DNA duplexes (Holliday junction).. In terms of biological role, the RuvA-RuvB-RuvC complex processes Holliday junction (HJ) DNA during genetic recombination and DNA repair. Endonuclease that resolves HJ intermediates. Cleaves cruciform DNA by making single-stranded nicks across the HJ at symmetrical positions within the homologous arms, yielding a 5'-phosphate and a 3'-hydroxyl group; requires a central core of homology in the junction. The consensus cleavage sequence is 5'-(A/T)TT(C/G)-3'. Cleavage occurs on the 3'-side of the TT dinucleotide at the point of strand exchange. HJ branch migration catalyzed by RuvA-RuvB allows RuvC to scan DNA until it finds its consensus sequence, where it cleaves and resolves the cruciform DNA. This is Crossover junction endodeoxyribonuclease RuvC from Campylobacter jejuni subsp. jejuni serotype O:2 (strain ATCC 700819 / NCTC 11168).